The sequence spans 354 residues: Elongation factor Ts (354 aa).

The tract at residues 81 to 84 is involved in Mg(2+) ion dislocation from EF-Tu; sequence TDFV.

This sequence belongs to the EF-Ts family.

It localises to the cytoplasm. Associates with the EF-Tu.GDP complex and induces the exchange of GDP to GTP. It remains bound to the aminoacyl-tRNA.EF-Tu.GTP complex up to the GTP hydrolysis stage on the ribosome. The sequence is that of Elongation factor Ts from Campylobacter concisus (strain 13826).